We begin with the raw amino-acid sequence, 511 residues long: Glutamyl-tRNA(Gln) amidotransferase subunit B, mitochondrial (511 aa).

The transit peptide at 1-6 (MLRRYL) directs the protein to the mitochondrion.

Belongs to the GatB/GatE family. GatB subfamily. Subunit of the heterotrimeric GatFAB amidotransferase (AdT) complex, composed of A, B and F subunits.

It is found in the mitochondrion. It catalyses the reaction L-glutamyl-tRNA(Gln) + L-glutamine + ATP + H2O = L-glutaminyl-tRNA(Gln) + L-glutamate + ADP + phosphate + H(+). Functionally, allows the formation of correctly charged Gln-tRNA(Gln) through the transamidation of misacylated Glu-tRNA(Gln) in the mitochondria. The reaction takes place in the presence of glutamine and ATP through an activated gamma-phospho-Glu-tRNA(Gln). This Lodderomyces elongisporus (strain ATCC 11503 / CBS 2605 / JCM 1781 / NBRC 1676 / NRRL YB-4239) (Yeast) protein is Glutamyl-tRNA(Gln) amidotransferase subunit B, mitochondrial.